A 276-amino-acid chain; its full sequence is 2-dehydro-3-deoxyphosphooctonate aldolase (276 aa).

This sequence belongs to the KdsA family.

The protein resides in the cytoplasm. It catalyses the reaction D-arabinose 5-phosphate + phosphoenolpyruvate + H2O = 3-deoxy-alpha-D-manno-2-octulosonate-8-phosphate + phosphate. Its pathway is carbohydrate biosynthesis; 3-deoxy-D-manno-octulosonate biosynthesis; 3-deoxy-D-manno-octulosonate from D-ribulose 5-phosphate: step 2/3. It functions in the pathway bacterial outer membrane biogenesis; lipopolysaccharide biosynthesis. This chain is 2-dehydro-3-deoxyphosphooctonate aldolase, found in Helicobacter pylori (strain HPAG1).